A 459-amino-acid polypeptide reads, in one-letter code: Bifunctional protein GlmU (459 aa).

The tract at residues 1–230 (MSNRFAVILA…FDETLGVNDR (230 aa)) is pyrophosphorylase. UDP-N-acetyl-alpha-D-glucosamine contacts are provided by residues 9 to 12 (LAAG), Lys23, Gln73, and 78 to 79 (GT). Asp103 is a binding site for Mg(2+). Residues Gly140, Glu155, Asn170, and Asn228 each contribute to the UDP-N-acetyl-alpha-D-glucosamine site. Mg(2+) is bound at residue Asn228. The tract at residues 231 to 251 (VALSQAEIIMKNRINRKNMVN) is linker. Positions 252–459 (GVTIIDPSNT…VDQLLNKKKS (208 aa)) are N-acetyltransferase. Positions 333 and 351 each coordinate UDP-N-acetyl-alpha-D-glucosamine. Catalysis depends on His363, which acts as the Proton acceptor. UDP-N-acetyl-alpha-D-glucosamine contacts are provided by Tyr366 and Asn377. Acetyl-CoA contacts are provided by residues 386–387 (NY), Ala423, and Arg440.

The protein in the N-terminal section; belongs to the N-acetylglucosamine-1-phosphate uridyltransferase family. It in the C-terminal section; belongs to the transferase hexapeptide repeat family. As to quaternary structure, homotrimer. Requires Mg(2+) as cofactor.

The protein resides in the cytoplasm. The enzyme catalyses alpha-D-glucosamine 1-phosphate + acetyl-CoA = N-acetyl-alpha-D-glucosamine 1-phosphate + CoA + H(+). The catalysed reaction is N-acetyl-alpha-D-glucosamine 1-phosphate + UTP + H(+) = UDP-N-acetyl-alpha-D-glucosamine + diphosphate. It functions in the pathway nucleotide-sugar biosynthesis; UDP-N-acetyl-alpha-D-glucosamine biosynthesis; N-acetyl-alpha-D-glucosamine 1-phosphate from alpha-D-glucosamine 6-phosphate (route II): step 2/2. The protein operates within nucleotide-sugar biosynthesis; UDP-N-acetyl-alpha-D-glucosamine biosynthesis; UDP-N-acetyl-alpha-D-glucosamine from N-acetyl-alpha-D-glucosamine 1-phosphate: step 1/1. Its pathway is bacterial outer membrane biogenesis; LPS lipid A biosynthesis. Catalyzes the last two sequential reactions in the de novo biosynthetic pathway for UDP-N-acetylglucosamine (UDP-GlcNAc). The C-terminal domain catalyzes the transfer of acetyl group from acetyl coenzyme A to glucosamine-1-phosphate (GlcN-1-P) to produce N-acetylglucosamine-1-phosphate (GlcNAc-1-P), which is converted into UDP-GlcNAc by the transfer of uridine 5-monophosphate (from uridine 5-triphosphate), a reaction catalyzed by the N-terminal domain. The sequence is that of Bifunctional protein GlmU from Bacillus cereus (strain AH187).